Consider the following 888-residue polypeptide: Alanine--tRNA ligase (888 aa).

Positions 573, 577, 676, and 680 each coordinate Zn(2+).

This sequence belongs to the class-II aminoacyl-tRNA synthetase family. Zn(2+) serves as cofactor.

Its subcellular location is the cytoplasm. The catalysed reaction is tRNA(Ala) + L-alanine + ATP = L-alanyl-tRNA(Ala) + AMP + diphosphate. Its function is as follows. Catalyzes the attachment of alanine to tRNA(Ala) in a two-step reaction: alanine is first activated by ATP to form Ala-AMP and then transferred to the acceptor end of tRNA(Ala). Also edits incorrectly charged Ser-tRNA(Ala) and Gly-tRNA(Ala) via its editing domain. The sequence is that of Alanine--tRNA ligase from Corynebacterium diphtheriae (strain ATCC 700971 / NCTC 13129 / Biotype gravis).